The primary structure comprises 307 residues: Aspartate carbamoyltransferase catalytic subunit (307 aa).

Residues Arg56 and Thr57 each coordinate carbamoyl phosphate. An L-aspartate-binding site is contributed by Lys84. Positions 106, 136, and 139 each coordinate carbamoyl phosphate. L-aspartate contacts are provided by Arg169 and Arg221. Residues Ala262 and Pro263 each coordinate carbamoyl phosphate.

It belongs to the aspartate/ornithine carbamoyltransferase superfamily. ATCase family. Heterododecamer (2C3:3R2) of six catalytic PyrB chains organized as two trimers (C3), and six regulatory PyrI chains organized as three dimers (R2).

The catalysed reaction is carbamoyl phosphate + L-aspartate = N-carbamoyl-L-aspartate + phosphate + H(+). It participates in pyrimidine metabolism; UMP biosynthesis via de novo pathway; (S)-dihydroorotate from bicarbonate: step 2/3. Functionally, catalyzes the condensation of carbamoyl phosphate and aspartate to form carbamoyl aspartate and inorganic phosphate, the committed step in the de novo pyrimidine nucleotide biosynthesis pathway. The polypeptide is Aspartate carbamoyltransferase catalytic subunit (Streptococcus pneumoniae (strain JJA)).